Here is a 444-residue protein sequence, read N- to C-terminus: Acyl-CoA 6-desaturase (444 aa).

The Cytoplasmic segment spans residues 1 to 131 (MGKGGNQGEG…DMNLFKTNHV (131 aa)). In terms of domain architecture, Cytochrome b5 heme-binding spans 18–95 (VPTFSWEEIQ…LKPLLIGELA (78 aa)). A helical transmembrane segment spans residues 132 to 152 (FFLLLLAHIIALESIAWFTVF). Topologically, residues 153 to 157 (YFGNG) are lumenal. Residues 158–178 (WIPTLITAFVLATSQAQAGWL) traverse the membrane as a helical segment. Residues 179-264 (QHDYGHLSVY…KYLPYNHQHE (86 aa)) lie on the Cytoplasmic side of the membrane. A Histidine box-1 motif is present at residues 180 to 184 (HDYGH). Residues 217–221 (HFQHH) carry the Histidine box-2 motif. A helical transmembrane segment spans residues 265 to 285 (YFFLIGPPLLIPMYFQYQIIM). The Lumenal segment spans residues 286–305 (TMIVHKNWVDLAWAVSYYIR). A helical membrane pass occupies residues 306 to 326 (FFITYIPFYGILGALLFLNFI). Residues 327-444 (RFLESHWFVW…KLWLDAYLHK (118 aa)) are Cytoplasmic-facing. The Histidine box-3 motif lies at 382-386 (QIEHH).

Belongs to the fatty acid desaturase type 1 family. Expressed in a wide array of tissues, highest expression is found in liver followed by brain, lung, heart, and retina. A lower level is found in breast tumor when compared with normal tissues; lowest levels were found in patients with poor prognostic index.

The protein localises to the endoplasmic reticulum membrane. The catalysed reaction is (9Z,12Z)-octadecadienoyl-CoA + 2 Fe(II)-[cytochrome b5] + O2 + 2 H(+) = (6Z,9Z,12Z)-octadecatrienoyl-CoA + 2 Fe(III)-[cytochrome b5] + 2 H2O. It carries out the reaction (9Z,12Z,15Z)-octadecatrienoyl-CoA + 2 Fe(II)-[cytochrome b5] + O2 + 2 H(+) = (6Z,9Z,12Z,15Z)-octadecatetraenoyl-CoA + 2 Fe(III)-[cytochrome b5] + 2 H2O. The enzyme catalyses hexadecanoyl-CoA + 2 Fe(II)-[cytochrome b5] + O2 + 2 H(+) = (6Z)-hexadecenoyl-CoA + 2 Fe(III)-[cytochrome b5] + 2 H2O. It catalyses the reaction (9Z,12Z,15Z,18Z,21Z)-tetracosapentaenoyl-CoA + 2 Fe(II)-[cytochrome b5] + O2 + 2 H(+) = (6Z,9Z,12Z,15Z,18Z,21Z)-tetracosahexaenoyl-CoA + 2 Fe(III)-[cytochrome b5] + 2 H2O. The catalysed reaction is (11E)-octadecenoyl-CoA + 2 Fe(II)-[cytochrome b5] + O2 + 2 H(+) = (6Z,11E)-octadecadienoyl-CoA + 2 Fe(III)-[cytochrome b5] + 2 H2O. It carries out the reaction (11Z,14Z)-eicosadienoyl-CoA + 2 Fe(II)-[cytochrome b5] + O2 + 2 H(+) = (8Z,11Z,14Z)-eicosatrienoyl-CoA + 2 Fe(III)-[cytochrome b5] + 2 H2O. The enzyme catalyses (11Z,14Z,17Z)-eicosatrienoyl-CoA + 2 Fe(II)-[cytochrome b5] + O2 + 2 H(+) = (8Z,11Z,14Z,17Z)-eicosatetraenoyl-CoA + 2 Fe(III)-[cytochrome b5] + 2 H2O. The protein operates within lipid metabolism; polyunsaturated fatty acid biosynthesis. Involved in the biosynthesis of highly unsaturated fatty acids (HUFA) from the essential polyunsaturated fatty acids (PUFA) linoleic acid (LA) (18:2n-6) and alpha-linolenic acid (ALA) (18:3n-3) precursors, acting as a fatty acyl-coenzyme A (CoA) desaturase that introduces a cis double bond at carbon 6 of the fatty acyl chain. Catalyzes the first and rate limiting step in this pathway which is the desaturation of LA (18:2n-6) and ALA (18:3n-3) into gamma-linoleate (GLA) (18:3n-6) and stearidonate (18:4n-3), respectively. Subsequently, in the biosynthetic pathway of HUFA n-3 series, it desaturates tetracosapentaenoate (24:5n-3) to tetracosahexaenoate (24:6n-3), which is then converted to docosahexaenoate (DHA)(22:6n-3), an important lipid for nervous system function. Desaturates hexadecanate (palmitate) to produce 6Z-hexadecenoate (sapienate), a fatty acid unique to humans and major component of human sebum, that has been implicated in the development of acne and may have potent antibacterial activity. It can also desaturate (11E)-octadecenoate (trans-vaccenoate, the predominant trans fatty acid in human milk) at carbon 6 generating (6Z,11E)-octadecadienoate. In addition to Delta-6 activity, this enzyme exhibits Delta-8 activity with slight biases toward n-3 fatty acyl-CoA substrates. The chain is Acyl-CoA 6-desaturase from Homo sapiens (Human).